The chain runs to 1021 residues: Ubiquitin-activating enzyme E1 1 (1021 aa).

Positions 22, 442, and 468 each coordinate ATP. Aspartate 470 serves as a coordination point for Mg(2+). Residues arginine 479, lysine 492, valine 518, and aspartate 542–asparagine 543 contribute to the ATP site. Mg(2+) is bound at residue aspartate 542. Catalysis depends on cysteine 598, which acts as the Glycyl thioester intermediate.

This sequence belongs to the ubiquitin-activating E1 family. As to quaternary structure, monomer.

Its subcellular location is the cytoplasm. It is found in the nucleus. It carries out the reaction ATP + ubiquitin + [E1 ubiquitin-activating enzyme]-L-cysteine = AMP + diphosphate + S-ubiquitinyl-[E1 ubiquitin-activating enzyme]-L-cysteine.. It participates in protein modification; protein ubiquitination. Its function is as follows. E1 ubiquitin-activating enzyme that catalyzes the first step in ubiquitin conjugation to mark cellular proteins for degradation through the ubiquitin-proteasome system. Activates ubiquitin by first adenylating its C-terminal glycine residue with ATP, and thereafter linking this residue to the side chain of a cysteine residue in E1, yielding a ubiquitin-E1 thioester and free AMP. The sequence is that of Ubiquitin-activating enzyme E1 1 (UBA1) from Candida albicans (strain WO-1) (Yeast).